We begin with the raw amino-acid sequence, 88 residues long: Otospiralin (88 aa).

A signal peptide spans 1-21 (MQACMVPGLALCLLLGSLTEA).

The protein belongs to the otospiralin family. In terms of tissue distribution, ear specific.

Its subcellular location is the secreted. May be essential for the survival of the neurosensory epithelium of the inner ear. This Cavia porcellus (Guinea pig) protein is Otospiralin (OTOS).